The following is a 701-amino-acid chain: Elongation factor G (701 aa).

The region spanning 8–286 (ERIRNIGIIA…AIVHYLPSPV (279 aa)) is the tr-type G domain. GTP-binding positions include 17–24 (AHIDAGKT), 85–89 (DTPGH), and 139–142 (NKMD).

This sequence belongs to the TRAFAC class translation factor GTPase superfamily. Classic translation factor GTPase family. EF-G/EF-2 subfamily.

The protein resides in the cytoplasm. Its function is as follows. Catalyzes the GTP-dependent ribosomal translocation step during translation elongation. During this step, the ribosome changes from the pre-translocational (PRE) to the post-translocational (POST) state as the newly formed A-site-bound peptidyl-tRNA and P-site-bound deacylated tRNA move to the P and E sites, respectively. Catalyzes the coordinated movement of the two tRNA molecules, the mRNA and conformational changes in the ribosome. This chain is Elongation factor G, found in Roseiflexus sp. (strain RS-1).